Consider the following 432-residue polypeptide: uncharacterized protein (432 aa).

One can recognise a Cytochrome c domain in the interval 223–432 (ASAVRGEALF…KDLIEYLKTR (210 aa)). 3 residues coordinate heme c: C236, C239, and H240.

This is an uncharacterized protein from Sinorhizobium fredii (strain NBRC 101917 / NGR234).